A 59-amino-acid chain; its full sequence is Large ribosomal subunit protein bL32c (59 aa).

Positions 37–59 (SRSFSRGNEHPKPKGFSGQQANK) are disordered.

The protein belongs to the bacterial ribosomal protein bL32 family.

It localises to the plastid. Its subcellular location is the chloroplast. The polypeptide is Large ribosomal subunit protein bL32c (rpl32) (Zea mays (Maize)).